The sequence spans 224 residues: Attacin-A (224 aa).

Residues 1 to 20 (MQKTSILIVALVALFAITEA) form the signal peptide. Positions 21 to 34 (LPSLPTTGPIRVRR) are excised as a propeptide.

This sequence belongs to the attacin/sarcotoxin-2 family. Hemolymph (at protein level).

It is found in the secreted. Functionally, hemolymph antibacterial protein. This Drosophila melanogaster (Fruit fly) protein is Attacin-A (AttA).